We begin with the raw amino-acid sequence, 274 residues long: Dermonecrotic toxin SdSicTox-betaIIB1aii (274 aa).

His-5 is a catalytic residue. The Mg(2+) site is built by Glu-25 and Asp-27. Residue His-41 is the Nucleophile of the active site. Cystine bridges form between Cys-45/Cys-51 and Cys-47/Cys-190. Asp-85 contacts Mg(2+).

The protein belongs to the arthropod phospholipase D family. Class II subfamily. The cofactor is Mg(2+). In terms of tissue distribution, expressed by the venom gland.

The protein localises to the secreted. The enzyme catalyses an N-(acyl)-sphingosylphosphocholine = an N-(acyl)-sphingosyl-1,3-cyclic phosphate + choline. The catalysed reaction is an N-(acyl)-sphingosylphosphoethanolamine = an N-(acyl)-sphingosyl-1,3-cyclic phosphate + ethanolamine. It catalyses the reaction a 1-acyl-sn-glycero-3-phosphocholine = a 1-acyl-sn-glycero-2,3-cyclic phosphate + choline. It carries out the reaction a 1-acyl-sn-glycero-3-phosphoethanolamine = a 1-acyl-sn-glycero-2,3-cyclic phosphate + ethanolamine. Functionally, dermonecrotic toxins cleave the phosphodiester linkage between the phosphate and headgroup of certain phospholipids (sphingolipid and lysolipid substrates), forming an alcohol (often choline) and a cyclic phosphate. This toxin acts on sphingomyelin (SM). It may also act on ceramide phosphoethanolamine (CPE), lysophosphatidylcholine (LPC) and lysophosphatidylethanolamine (LPE), but not on lysophosphatidylserine (LPS), and lysophosphatidylglycerol (LPG). It acts by transphosphatidylation, releasing exclusively cyclic phosphate products as second products. Induces dermonecrosis, hemolysis, increased vascular permeability, edema, inflammatory response, and platelet aggregation. The polypeptide is Dermonecrotic toxin SdSicTox-betaIIB1aii (Sicarius cf. damarensis (strain GJB-2008) (Six-eyed sand spider)).